The sequence spans 324 residues: Succinylglutamate desuccinylase (324 aa).

3 residues coordinate Zn(2+): H53, E56, and H148. Residue E211 is part of the active site.

This sequence belongs to the AspA/AstE family. Succinylglutamate desuccinylase subfamily. The cofactor is Zn(2+).

The catalysed reaction is N-succinyl-L-glutamate + H2O = L-glutamate + succinate. It functions in the pathway amino-acid degradation; L-arginine degradation via AST pathway; L-glutamate and succinate from L-arginine: step 5/5. Functionally, transforms N(2)-succinylglutamate into succinate and glutamate. The protein is Succinylglutamate desuccinylase of Acinetobacter baumannii (strain SDF).